A 201-amino-acid chain; its full sequence is NAD(P)H dehydrogenase (quinone) (201 aa).

The Flavodoxin-like domain occupies 4 to 191 (VLVLYYSMYG…KIAKCQGVHV (188 aa)). Residues 10-15 (SMYGHV) and 79-81 (TRF) contribute to the FMN site. Y12 contacts NAD(+). W99 contacts substrate. Residues 114–120 (STGTQHG) and H135 contribute to the FMN site.

This sequence belongs to the WrbA family. It depends on FMN as a cofactor.

The enzyme catalyses a quinone + NADH + H(+) = a quinol + NAD(+). It catalyses the reaction a quinone + NADPH + H(+) = a quinol + NADP(+). The polypeptide is NAD(P)H dehydrogenase (quinone) (Hydrogenovibrio crunogenus (strain DSM 25203 / XCL-2) (Thiomicrospira crunogena)).